A 163-amino-acid chain; its full sequence is Type VII secretion system protein EsaG (163 aa).

As to quaternary structure, interacts with EssD (via C-terminus). Interacts with EssE.

It localises to the cytoplasm. Component of the type VII secretion system (Ess). Also acts as part of toxin-antitoxin system. Counteracts the toxic effect of EssD via direct interaction. This Staphylococcus aureus (strain NCTC 8325 / PS 47) protein is Type VII secretion system protein EsaG.